A 629-amino-acid polypeptide reads, in one-letter code: tRNA uridine 5-carboxymethylaminomethyl modification enzyme MnmG (629 aa).

Residues 13 to 18 (GGGHAG), V125, and S180 contribute to the FAD site. 273–287 (GPRYCPSIEDKVMRF) is an NAD(+) binding site. Q370 is an FAD binding site.

The protein belongs to the MnmG family. As to quaternary structure, homodimer. Heterotetramer of two MnmE and two MnmG subunits. Requires FAD as cofactor.

The protein resides in the cytoplasm. Its function is as follows. NAD-binding protein involved in the addition of a carboxymethylaminomethyl (cmnm) group at the wobble position (U34) of certain tRNAs, forming tRNA-cmnm(5)s(2)U34. This is tRNA uridine 5-carboxymethylaminomethyl modification enzyme MnmG from Salmonella schwarzengrund (strain CVM19633).